The following is a 256-amino-acid chain: tRNA (guanine-N(7)-)-methyltransferase (256 aa).

Residues Glu85, Glu110, Asp137, and Asp159 each contribute to the S-adenosyl-L-methionine site. The active site involves Asp159. Lys163 and Asp195 together coordinate substrate.

The protein belongs to the class I-like SAM-binding methyltransferase superfamily. TrmB family.

It carries out the reaction guanosine(46) in tRNA + S-adenosyl-L-methionine = N(7)-methylguanosine(46) in tRNA + S-adenosyl-L-homocysteine. It participates in tRNA modification; N(7)-methylguanine-tRNA biosynthesis. Functionally, catalyzes the formation of N(7)-methylguanine at position 46 (m7G46) in tRNA. The sequence is that of tRNA (guanine-N(7)-)-methyltransferase from Rhodopseudomonas palustris (strain BisB5).